The chain runs to 350 residues: DNA-directed RNA polymerase subunit alpha (350 aa).

Positions 1–226 are alpha N-terminal domain (alpha-NTD); sequence MLISQRPTLS…ELFGLARELN (226 aa). Residues 241-350 are alpha C-terminal domain (alpha-CTD); the sequence is ADHIASFALP…NQDYAETEQL (110 aa). The interval 328 to 350 is disordered; sequence GTWTSDAGYDLDDNQDYAETEQL. Residues 336–350 show a composition bias toward acidic residues; the sequence is YDLDDNQDYAETEQL.

Belongs to the RNA polymerase alpha chain family. Homodimer. The RNAP catalytic core consists of 2 alpha, 1 beta, 1 beta' and 1 omega subunit. When a sigma factor is associated with the core the holoenzyme is formed, which can initiate transcription.

The catalysed reaction is RNA(n) + a ribonucleoside 5'-triphosphate = RNA(n+1) + diphosphate. In terms of biological role, DNA-dependent RNA polymerase catalyzes the transcription of DNA into RNA using the four ribonucleoside triphosphates as substrates. The sequence is that of DNA-directed RNA polymerase subunit alpha from Mycolicibacterium smegmatis (strain ATCC 700084 / mc(2)155) (Mycobacterium smegmatis).